We begin with the raw amino-acid sequence, 502 residues long: Xyloglucan-specific endo-beta-1,4-glucanase BoGH5A (502 aa).

The N-terminal stretch at 1–32 (MEKQSFSDGLFSPLGIKRVIFMLVLLTTSFIS) is a signal peptide. Cys-33 carries N-palmitoyl cysteine lipidation. Cys-33 carries the S-diacylglycerol cysteine lipid modification. In terms of domain architecture, BACON spans 67-127 (GPAEWHISTS…PDIIINVKQS (61 aa)). Residues Asn-165, Val-172, His-251, and Asn-296 each coordinate substrate. Glu-297 functions as the Proton donor in the catalytic mechanism. Residue Glu-430 is the Nucleophile of the active site. Trp-472 is a substrate binding site.

Belongs to the glycosyl hydrolase 5 (cellulase A) family.

Its subcellular location is the cell outer membrane. It carries out the reaction xyloglucan + H2O = xyloglucan oligosaccharides.. The protein operates within glucan metabolism; xyloglucan degradation. Catalyzes endohydrolysis of 1,4-beta-D-glucosidic linkages in xyloglucan with retention of the beta-configuration of the glycosyl residues in xyloglucan degradation. Cleaves the backbone of the 3 major types of natural xyloglucans (seed galactoxyloglucan from tamarind kernel, dicot fucogalactoxyloglucan from lettuce leaves, and solanaceous arabinogalactoxyloglucan from tomato fruit), to produce xyloglucan oligosaccharides. The sequence is that of Xyloglucan-specific endo-beta-1,4-glucanase BoGH5A from Bacteroides ovatus (strain ATCC 8483 / DSM 1896 / JCM 5824 / BCRC 10623 / CCUG 4943 / NCTC 11153).